Consider the following 478-residue polypeptide: tRNA (adenine(58)-N(1))-methyltransferase non-catalytic subunit TRM6 (478 aa).

The segment at Ser456–Ile478 is disordered. Basic and acidic residues predominate over residues Ser464–Ile478.

This sequence belongs to the TRM6/GCD10 family. Heterotetramer; composed of two copies of TRM6/GCD10 and two copies of TRM61/GCD14.

It is found in the nucleus. Substrate-binding subunit of tRNA (adenine-N(1)-)-methyltransferase, which catalyzes the formation of N(1)-methyladenine at position 58 (m1A58) in initiator methionyl-tRNA. Also required for repression of GCN4 mRNA translation by the upstream open reading frames (uORFs) under conditions of amino acid sufficiency. The polypeptide is tRNA (adenine(58)-N(1))-methyltransferase non-catalytic subunit TRM6 (GCD10) (Saccharomyces cerevisiae (strain ATCC 204508 / S288c) (Baker's yeast)).